The sequence spans 161 residues: Endoribonuclease YbeY (161 aa).

Residues H121, H125, and H131 each contribute to the Zn(2+) site.

It belongs to the endoribonuclease YbeY family. Zn(2+) serves as cofactor.

It localises to the cytoplasm. Its function is as follows. Single strand-specific metallo-endoribonuclease involved in late-stage 70S ribosome quality control and in maturation of the 3' terminus of the 16S rRNA. In Xanthomonas euvesicatoria pv. vesicatoria (strain 85-10) (Xanthomonas campestris pv. vesicatoria), this protein is Endoribonuclease YbeY.